The sequence spans 570 residues: 4-hydroxy-7-methoxy-3-oxo-3,4-dihydro-2H-1,4-benzoxazin-2-yl glucoside beta-D-glucosidase 1c, chloroplastic (570 aa).

Residues 1 to 50 (MALLAAATLNPTTHLSIRSRAGHNSENLWLRSAASSQKSKGRFCNLTVRA) constitute a chloroplast transit peptide. A beta-D-glucoside is bound by residues glutamine 92, histidine 194, and 239-240 (NE). Residue glutamate 240 is the Proton donor of the active site. Cysteine 259 and cysteine 265 are oxidised to a cystine. Residues tyrosine 383, glutamate 456, tryptophan 504, 511–512 (EW), and phenylalanine 520 contribute to the a beta-D-glucoside site. Glutamate 456 functions as the Nucleophile in the catalytic mechanism.

This sequence belongs to the glycosyl hydrolase 1 family. Homo- and heterohexamers. As to expression, expressed in young seedlings early after germination.

The protein resides in the plastid. Its subcellular location is the chloroplast. The enzyme catalyses Hydrolysis of terminal, non-reducing beta-D-glucosyl residues with release of beta-D-glucose.. It carries out the reaction DIMBOA beta-D-glucoside + H2O = DIMBOA + D-glucose. It catalyses the reaction DIBOA beta-D-glucoside + H2O = DIBOA + D-glucose. Functionally, acts in defense of young plant parts against pests via the production of hydroxamic acids from hydroxamic acid glucosides. Enzymatic activity is highly correlated with plant growth. The preferred substrate is DIMBOA-beta-D-glucoside. The protein is 4-hydroxy-7-methoxy-3-oxo-3,4-dihydro-2H-1,4-benzoxazin-2-yl glucoside beta-D-glucosidase 1c, chloroplastic (GLU1C) of Triticum aestivum (Wheat).